Reading from the N-terminus, the 526-residue chain is Meiotically up-regulated gene 99 protein, mitochondrial (526 aa).

A run of 2 helical transmembrane segments spans residues T398–V418 and F421–L441.

The protein resides in the mitochondrion membrane. Functionally, required for correct meiotic chromosome segregation. Appears to also have role in sporulation. The chain is Meiotically up-regulated gene 99 protein, mitochondrial (mug99) from Schizosaccharomyces pombe (strain 972 / ATCC 24843) (Fission yeast).